Here is a 304-residue protein sequence, read N- to C-terminus: Acetyl-coenzyme A carboxylase carboxyl transferase subunit beta (304 aa).

Positions 25–294 constitute a CoA carboxyltransferase N-terminal domain; the sequence is VWTKCDSCGQ…PSVVESKADT (270 aa). 4 residues coordinate Zn(2+): Cys29, Cys32, Cys48, and Cys51. The C4-type zinc finger occupies 29 to 51; it reads CDSCGQVLYRAELERNLEVCPKC.

This sequence belongs to the AccD/PCCB family. In terms of assembly, acetyl-CoA carboxylase is a heterohexamer composed of biotin carboxyl carrier protein (AccB), biotin carboxylase (AccC) and two subunits each of ACCase subunit alpha (AccA) and ACCase subunit beta (AccD). Zn(2+) serves as cofactor.

The protein localises to the cytoplasm. The catalysed reaction is N(6)-carboxybiotinyl-L-lysyl-[protein] + acetyl-CoA = N(6)-biotinyl-L-lysyl-[protein] + malonyl-CoA. Its pathway is lipid metabolism; malonyl-CoA biosynthesis; malonyl-CoA from acetyl-CoA: step 1/1. Its function is as follows. Component of the acetyl coenzyme A carboxylase (ACC) complex. Biotin carboxylase (BC) catalyzes the carboxylation of biotin on its carrier protein (BCCP) and then the CO(2) group is transferred by the transcarboxylase to acetyl-CoA to form malonyl-CoA. The sequence is that of Acetyl-coenzyme A carboxylase carboxyl transferase subunit beta from Yersinia pseudotuberculosis serotype O:1b (strain IP 31758).